The sequence spans 447 residues: MREIVHLQTGQCGNQIGAAFWQTISGEHGLDGSGVYNGTSDLQLERMNVYFNEASGNKYVPRAVLVDLEPGTMDAVRAGPFGQLFRPDNFVFGQSGAGNNWAKGHYTEGAELVDQVLDVVRREAEGCDCLQGFQITHSLGGGTGAGMGTLLISKIREEFPDRMMATFSVVPSPKVSDTVVEPYNATLSVHQLVENSDETFCIDNEALYDICMRTLKLSNPSYGDLNHLVSAVMSGVTTCLRFPGQLNSDLRKLAVNMVPFPRLHFFMVGFAPLTSRGAHSFRAVTVPELTQQMYDPKNMMAASDFRNGRYLTCSAIFRGKVSMKEVEDQMRNVQNKNSSYFVEWIPNNVQTALCSIPPRGLKMSSTFVGNSTSIQELFKRVGDQFTAMFRRKAFLHWYTGEGMDEMEFTEAESNMNDLVSEYQQYQDASISEGEEEYEEEVPIEGEE.

GTP is bound by residues Q11, E69, S138, G142, T143, G144, N204, and N226. Mg(2+) is bound at residue E69. A disordered region spans residues 425 to 447 (YQDASISEGEEEYEEEVPIEGEE). Acidic residues predominate over residues 432–447 (EGEEEYEEEVPIEGEE).

The protein belongs to the tubulin family. As to quaternary structure, dimer of alpha and beta chains. A typical microtubule is a hollow water-filled tube with an outer diameter of 25 nm and an inner diameter of 15 nM. Alpha-beta heterodimers associate head-to-tail to form protofilaments running lengthwise along the microtubule wall with the beta-tubulin subunit facing the microtubule plus end conferring a structural polarity. Microtubules usually have 13 protofilaments but different protofilament numbers can be found in some organisms and specialized cells. Requires Mg(2+) as cofactor.

The protein resides in the cytoplasm. Its subcellular location is the cytoskeleton. Its function is as follows. Tubulin is the major constituent of microtubules, a cylinder consisting of laterally associated linear protofilaments composed of alpha- and beta-tubulin heterodimers. Microtubules grow by the addition of GTP-tubulin dimers to the microtubule end, where a stabilizing cap forms. Below the cap, tubulin dimers are in GDP-bound state, owing to GTPase activity of alpha-tubulin. This is Tubulin beta chain (tubA) from Botryotinia fuckeliana (Noble rot fungus).